The sequence spans 180 residues: UPF0134 protein MPN_127 (180 aa).

The protein belongs to the UPF0134 family.

This is UPF0134 protein MPN_127 from Mycoplasma pneumoniae (strain ATCC 29342 / M129 / Subtype 1) (Mycoplasmoides pneumoniae).